We begin with the raw amino-acid sequence, 360 residues long: Olfactory receptor 1L1 (360 aa).

At 1–75 (MERNHNPDNC…GLSSRPEDQK (75 aa)) the chain is on the extracellular side. A glycan (N-linked (GlcNAc...) asparagine) is linked at asparagine 55. Residues 76-99 (PLFAVFLPIYLITVIGNLLIILAI) form a helical membrane-spanning segment. Topologically, residues 100–107 (RSDTRLQT) are cytoplasmic. Residues 108–129 (PMYFFLSILSFVDICYVTVIIP) traverse the membrane as a helical segment. The Extracellular segment spans residues 130–150 (KMLVNFLSETKTISYSECLTQ). Cysteine 147 and cysteine 239 are oxidised to a cystine. The helical transmembrane segment at 151-170 (MYFFLAFGNTDSYLLAAMAI) threads the bilayer. Topologically, residues 171–189 (DRYVAICNPFHYITIMSHR) are cytoplasmic. Residues 190-208 (CCVLLLVLSFCIPHFHSLL) form a helical membrane-spanning segment. At 209-246 (HILLTNQLIFCASNVIHHFFCDDQPVLKLSCSSHFVKE) the chain is on the extracellular side. Residues 247–269 (ITVMTEGLAVIMTPFSCIIISYL) traverse the membrane as a helical segment. Residues 270 to 286 (RILITVLKIPSAAGKRK) lie on the Cytoplasmic side of the membrane. A helical transmembrane segment spans residues 287–309 (AFSTCGSHLTVVTLFYGSISYLY). Residues 310 to 321 (FQPLSNYTVKDQ) lie on the Extracellular side of the membrane. Residue asparagine 315 is glycosylated (N-linked (GlcNAc...) asparagine). A helical membrane pass occupies residues 322–341 (IATIIYTVLTPMLNPFIYSL). Residues 342-360 (RNKDMKQGLAKLMHRMKCQ) are Cytoplasmic-facing.

This sequence belongs to the G-protein coupled receptor 1 family.

The protein resides in the cell membrane. Its function is as follows. Odorant receptor. The chain is Olfactory receptor 1L1 (OR1L1) from Homo sapiens (Human).